The following is a 236-amino-acid chain: Uridylate kinase (236 aa).

10 to 13 is a binding site for ATP; that stretch reads KLSG. Gly-52 lines the UMP pocket. ATP contacts are provided by Gly-53 and Arg-57. Residues Asp-72 and 133–140 contribute to the UMP site; that span reads TGNPFFTT. Thr-160, Tyr-166, and Asp-169 together coordinate ATP.

The protein belongs to the UMP kinase family. In terms of assembly, homohexamer.

The protein localises to the cytoplasm. It catalyses the reaction UMP + ATP = UDP + ADP. It functions in the pathway pyrimidine metabolism; CTP biosynthesis via de novo pathway; UDP from UMP (UMPK route): step 1/1. Its activity is regulated as follows. Inhibited by UTP. Catalyzes the reversible phosphorylation of UMP to UDP. The sequence is that of Uridylate kinase from Polaromonas sp. (strain JS666 / ATCC BAA-500).